A 102-amino-acid chain; its full sequence is Large ribosomal subunit protein bL21 (102 aa).

The protein belongs to the bacterial ribosomal protein bL21 family. As to quaternary structure, part of the 50S ribosomal subunit. Contacts protein L20.

In terms of biological role, this protein binds to 23S rRNA in the presence of protein L20. This Phytoplasma australiense protein is Large ribosomal subunit protein bL21.